The primary structure comprises 422 residues: UPF0761 membrane protein LHK_02978 (422 aa).

A run of 6 helical transmembrane segments spans residues 44-64, 102-122, 141-161, 178-198, 212-232, and 246-266; these read LLSL…FPVF, LTAV…LTID, MLVY…GISG, LAGI…LTVL, ALIG…GFGL, and AFAT…TVLI.

It belongs to the UPF0761 family.

Its subcellular location is the cell inner membrane. The polypeptide is UPF0761 membrane protein LHK_02978 (Laribacter hongkongensis (strain HLHK9)).